We begin with the raw amino-acid sequence, 234 residues long: Enterobactin synthase component D (234 aa).

Residues Asp107, Glu109, and Glu152 each coordinate Mg(2+).

This sequence belongs to the P-Pant transferase superfamily. EntD family. In terms of assembly, entB, EntD, EntE, and EntF form a multienzyme complex called enterobactin synthase. The cofactor is Mg(2+).

It localises to the membrane. It carries out the reaction apo-[aryl-carrier protein] + CoA = holo-[aryl-carrier protein] + adenosine 3',5'-bisphosphate + H(+). The enzyme catalyses apo-[peptidyl-carrier protein] + CoA = holo-[peptidyl-carrier protein] + adenosine 3',5'-bisphosphate + H(+). It participates in siderophore biosynthesis; enterobactin biosynthesis. Functionally, involved in the biosynthesis of the siderophore enterobactin (enterochelin), which is a macrocyclic trimeric lactone of N-(2,3-dihydroxybenzoyl)-serine. The serine trilactone serves as a scaffolding for the three catechol functionalities that provide hexadentate coordination for the tightly ligated iron(2+) atoms. Plays an essential role in the assembly of the enterobactin by catalyzing the transfer of the 4'-phosphopantetheine (Ppant) moiety from coenzyme A to the apo-domains of both EntB (ArCP domain) and EntF (PCP domain) to yield their holo-forms which make them competent for the activation of 2,3-dihydroxybenzoate (DHB) and L-serine, respectively. The polypeptide is Enterobactin synthase component D (Salmonella typhi).